Here is a 488-residue protein sequence, read N- to C-terminus: Glutamate--tRNA ligase (488 aa).

Positions 12-22 (PSPTGYMHVGN) match the 'HIGH' region motif. 4 residues coordinate Zn(2+): Cys-109, Cys-111, Cys-136, and His-138. The 'KMSKS' region motif lies at 253–257 (KLSKR). Residue Lys-256 participates in ATP binding.

The protein belongs to the class-I aminoacyl-tRNA synthetase family. Glutamate--tRNA ligase type 1 subfamily. Monomer. The cofactor is Zn(2+).

It localises to the cytoplasm. The catalysed reaction is tRNA(Glu) + L-glutamate + ATP = L-glutamyl-tRNA(Glu) + AMP + diphosphate. Its function is as follows. Catalyzes the attachment of glutamate to tRNA(Glu) in a two-step reaction: glutamate is first activated by ATP to form Glu-AMP and then transferred to the acceptor end of tRNA(Glu). This Clostridium tetani (strain Massachusetts / E88) protein is Glutamate--tRNA ligase.